The sequence spans 331 residues: Protein RecA (331 aa).

Position 66–73 (Gly-66–Thr-73) interacts with ATP.

Belongs to the RecA family.

The protein localises to the cytoplasm. In terms of biological role, can catalyze the hydrolysis of ATP in the presence of single-stranded DNA, the ATP-dependent uptake of single-stranded DNA by duplex DNA, and the ATP-dependent hybridization of homologous single-stranded DNAs. It interacts with LexA causing its activation and leading to its autocatalytic cleavage. This chain is Protein RecA, found in Acholeplasma laidlawii (strain PG-8A).